A 334-amino-acid polypeptide reads, in one-letter code: D-aspartate oxidase 2 (334 aa).

Residues aspartate 38, lysine 39, serine 46, glycine 310, and threonine 315 each contribute to the FAD site.

This sequence belongs to the DAMOX/DASOX family. FAD is required as a cofactor. In terms of tissue distribution, expressed in the intestinal cells, pharyngeal muscles, and body wall muscles in adult hermaphrodites.

It localises to the cytoplasm. The enzyme catalyses D-aspartate + O2 + H2O = oxaloacetate + H2O2 + NH4(+). The catalysed reaction is D-glutamate + O2 + H2O = H2O2 + 2-oxoglutarate + NH4(+). With respect to regulation, inhibited by thiolactomycin. Its function is as follows. Selectively catalyzes the oxidative deamination of acidic amino acids. May play a role in the egg-laying events and early development of the worm, in addition to quality control of the germ cells. In Caenorhabditis elegans, this protein is D-aspartate oxidase 2 (ddo-2).